The sequence spans 753 residues: Catalase-peroxidase (753 aa).

The tryptophyl-tyrosyl-methioninium (Trp-Tyr) (with M-269) cross-link spans 91–243 (WHSAGTYRIG…LGAVQMGLIY (153 aa)). The active-site Proton acceptor is H92. The segment at residues 243–269 (YVNPEGPDGNPDPLAAAHDIRETFARM) is a cross-link (tryptophyl-tyrosyl-methioninium (Tyr-Met) (with W-91)). Position 284 (H284) interacts with heme b.

This sequence belongs to the peroxidase family. Peroxidase/catalase subfamily. In terms of assembly, homodimer or homotetramer. Heme b serves as cofactor. Post-translationally, formation of the three residue Trp-Tyr-Met cross-link is important for the catalase, but not the peroxidase activity of the enzyme.

It catalyses the reaction H2O2 + AH2 = A + 2 H2O. The catalysed reaction is 2 H2O2 = O2 + 2 H2O. Functionally, bifunctional enzyme with both catalase and broad-spectrum peroxidase activity. The sequence is that of Catalase-peroxidase from Paraburkholderia xenovorans (strain LB400).